The sequence spans 326 residues: MSPAAAAEPDGVRGDRHVSKLIFFLFVIGAILLCVGVLLSIFGFQACQYKTFPDCSMMLKIAGPACAVVGLGAVILARSRARLQQTEERLRGNNQADSDRPFLCGESRQFVQCLIFGFLFLTSGMLISVLGIWVPGCGSDWMQESLNETDTADSEPQICGFLSLQILGPLIVLVGLCFFVVAHVKKRSNLNGDQDASESEERQTQSLEPIQVTVGDAVIIFPPPPPPYFPESSASAAARSPGTDGLLPDESPPSYYSIFQSGSPTPEGQGAASERDCELIYTISGTASSSETSHTLHLLSELPPRYEEKETATTTSLSPSSEPSPP.

Helical transmembrane passes span 22–42, 57–77, 114–134, and 161–181; these read IFFLFVIGAILLCVGVLLSIF, MMLKIAGPACAVVGLGAVILA, LIFGFLFLTSGMLISVLGIWV, and FLSLQILGPLIVLVGLCFFVV. A disordered region spans residues 229-326; it reads FPESSASAAA…LSPSSEPSPP (98 aa). The segment covering 230 to 240 has biased composition (low complexity); it reads PESSASAAARS. Over residues 257-266 the composition is skewed to polar residues; the sequence is SIFQSGSPTP. 2 stretches are compositionally biased toward low complexity: residues 288–302 and 312–326; these read SSSETSHTLHLLSEL and ATTTSLSPSSEPSPP.

Its subcellular location is the membrane. The sequence is that of Transmembrane protein 171 (TMEM171) from Bos taurus (Bovine).